Consider the following 710-residue polypeptide: Tubulin polyglutamylase TTLL11 (710 aa).

The interval 41 to 135 (VRVDAGAAGE…QRPVTVDSSK (95 aa)) is disordered. The span at 51-60 (PECKAGEEQP) shows a compositional bias: basic and acidic residues. Residues 64 to 82 (APAPAQPSAAEEGNTQVLQ) show a composition bias toward low complexity. Residues 83-93 (RPPPTLPPSKP) show a composition bias toward pro residues. Positions 123–135 (NGSQRPVTVDSSK) are enriched in polar residues. The TTL domain maps to 128-480 (PVTVDSSKAR…EVKVAVIRDT (353 aa)). Residues Lys249, 255–256 (QG), 282–285 (QEYI), and 295–297 (KFD) contribute to the ATP site. Gln255 contributes to the a protein binding site. Arg321 provides a ligand contact to L-glutamate. 343–344 (TN) is a binding site for ATP. Tyr345, Ser346, and Lys365 together coordinate L-glutamate. Mg(2+) is bound by residues Asp428, Glu441, and Asn443. The segment at 467–538 (LVDEEVKVAV…SICLKQVFPK (72 aa)) is c-MTBD region. L-glutamate is bound at residue Lys473. The disordered stretch occupies residues 665-710 (GVPSGGRPPHRGPPQEPSPSAQPAGDNPPPRTSCANKLSHPRHTLS).

It belongs to the tubulin--tyrosine ligase family. Mg(2+) is required as a cofactor.

It localises to the cytoplasm. It is found in the cytoskeleton. The protein resides in the cilium basal body. It catalyses the reaction L-glutamyl-[protein] + L-glutamate + ATP = gamma-L-glutamyl-L-glutamyl-[protein] + ADP + phosphate + H(+). The catalysed reaction is (L-glutamyl)(n)-gamma-L-glutamyl-L-glutamyl-[protein] + L-glutamate + ATP = (L-glutamyl)(n+1)-gamma-L-glutamyl-L-glutamyl-[protein] + ADP + phosphate + H(+). Functionally, polyglutamylase which modifies tubulin, generating polyglutamate side chains of variable lengths on the gamma-carboxyl group of specific glutamate residues within the C-terminal tail of tubulin. Preferentially mediates ATP-dependent polyglutamate long side-chain elongation over the initiation step of the polyglutamylation reaction. Preferentially modifies the alpha-tubulin tail over a beta-tail. Required for CCSAP localization to both spindle and cilia microtubules. Promotes tubulin polyglutamylation which stimulates spastin/SPAST-mediated microtubule severing, thereby regulating microtubule functions. This Homo sapiens (Human) protein is Tubulin polyglutamylase TTLL11.